A 76-amino-acid polypeptide reads, in one-letter code: Vasotab (76 aa).

The N-terminal stretch at 1–20 (MKFALFSVLVVLLIATFVAA) is a signal peptide. The Kazal-like domain occupies 21–76 (DECPRICTADYRPVCGTPSGGRRSANRTFGNQCSLNAHNCLNKGDTYDKLHDGECK). Intrachain disulfides connect Cys23–Cys60, Cys27–Cys53, and Cys35–Cys75.

As to expression, expressed by the salivary gland.

It is found in the secreted. Functionally, vasodilator protein that inhibits vasoconstriction of isolated rat femoral artery induced by phenylephrine. Since platelet aggregation and vasoconstriction are key hemostatic responses, particularly in small wounds, this protein likely participates in the antihemostatic responses during blood feeding. Blocks L-type calcium channels (Cav1/CACNA1) in left ventricular myocytes isolated from rat hearts. The polypeptide is Vasotab (Hybomitra bimaculata (Horse fly)).